Here is a 169-residue protein sequence, read N- to C-terminus: Putative pre-16S rRNA nuclease (169 aa).

The span at 1–19 (MTDSDHRLPDRPGEGDPGR) shows a compositional bias: basic and acidic residues. The tract at residues 1–24 (MTDSDHRLPDRPGEGDPGRGRRIG) is disordered.

The protein belongs to the YqgF nuclease family.

Its subcellular location is the cytoplasm. Could be a nuclease involved in processing of the 5'-end of pre-16S rRNA. This chain is Putative pre-16S rRNA nuclease, found in Mycobacterium sp. (strain KMS).